A 258-amino-acid chain; its full sequence is Protein IMPACT homolog (258 aa).

The region spanning 10–114 is the RWD domain; that stretch reads EELEAVEAIY…TELDGVLYVE (105 aa). A Glycyl lysine isopeptide (Lys-Gly) (interchain with G-Cter in ubiquitin) cross-link involves residue Lys187.

Belongs to the IMPACT family. In terms of assembly, interacts (via N-terminus) with GCN1 (via C-terminus); this interaction reduces the GCN1-GCN20 complex formation and prevents the interaction of GCN1 with GCN2 protein kinase and GCN2 activation in amino acid-starved cells. Interacts (via C-terminus) with ACT1; this interaction occurs in a GCN1-independent manner. Interacts with RPL39; this interaction occurs in a GCN1-independent manner. Associates (via middle region) with ribosomes; this association occurs in a GCN1-independent manner and persists under amino acid starvation conditions.

The protein resides in the cytoplasm. The protein localises to the nucleus. Its function is as follows. Translational regulator that ensures constant high levels of translation under amino acid starvation. Plays a role as a negative regulator of the GCN2 kinase activity; impairs GCN1-mediated GCN2 activation, and hence GCN2-mediated eIF-2-alpha phosphorylation in amino acid-starved cells and subsequent down-regulation of protein synthesis. In normal conditions, it resides in a actin complex and has no activity. The sequence is that of Protein IMPACT homolog (YIH1) from Saccharomyces cerevisiae (strain ATCC 204508 / S288c) (Baker's yeast).